The following is a 431-amino-acid chain: Adenylosuccinate synthetase (431 aa).

GTP is bound by residues Gly12–Lys18 and Gly40–Thr42. Catalysis depends on Asp13, which acts as the Proton acceptor. Mg(2+) is bound by residues Asp13 and Gly40. IMP-binding positions include Asp13 to Lys16, Asn38 to His41, Thr131, Arg145, Gln225, Thr240, and Arg304. His41 acts as the Proton donor in catalysis. Thr300–Arg306 contributes to the substrate binding site. Residues Arg306, Lys332–Asp334, and Ser414–Ser416 each bind GTP.

This sequence belongs to the adenylosuccinate synthetase family. In terms of assembly, homodimer. Requires Mg(2+) as cofactor.

The protein resides in the cytoplasm. The enzyme catalyses IMP + L-aspartate + GTP = N(6)-(1,2-dicarboxyethyl)-AMP + GDP + phosphate + 2 H(+). Its pathway is purine metabolism; AMP biosynthesis via de novo pathway; AMP from IMP: step 1/2. In terms of biological role, plays an important role in the de novo pathway of purine nucleotide biosynthesis. Catalyzes the first committed step in the biosynthesis of AMP from IMP. This Roseobacter denitrificans (strain ATCC 33942 / OCh 114) (Erythrobacter sp. (strain OCh 114)) protein is Adenylosuccinate synthetase.